An 863-amino-acid polypeptide reads, in one-letter code: Nitrate reductase [NADH] (863 aa).

Cys-137 contacts Mo-molybdopterin. The region spanning Lys-484–Ala-559 is the Cytochrome b5 heme-binding domain. Heme is bound by residues His-519 and His-542. The FAD-binding FR-type domain occupies Lys-602–Asp-719. Residues Arg-659–Thr-662, Val-676–Tyr-680, Phe-688, Lys-693–Ser-695, and Thr-746 contribute to the FAD site.

Belongs to the nitrate reductase family. As to quaternary structure, homodimer. FAD is required as a cofactor. The cofactor is Mo-molybdopterin. Requires heme as cofactor.

The enzyme catalyses nitrite + NAD(+) + H2O = nitrate + NADH + H(+). Its function is as follows. Nitrate reductase is a key enzyme involved in the first step of nitrate assimilation in plants, fungi and bacteria. The polypeptide is Nitrate reductase [NADH] (Ulva prolifera (Green seaweed)).